The sequence spans 309 residues: Sulfate adenylyltransferase subunit 2 (309 aa).

This sequence belongs to the PAPS reductase family. CysD subfamily. As to quaternary structure, heterodimer composed of CysD, the smaller subunit, and CysN.

The enzyme catalyses sulfate + ATP + H(+) = adenosine 5'-phosphosulfate + diphosphate. It functions in the pathway sulfur metabolism; hydrogen sulfide biosynthesis; sulfite from sulfate: step 1/3. Functionally, with CysN forms the ATP sulfurylase (ATPS) that catalyzes the adenylation of sulfate producing adenosine 5'-phosphosulfate (APS) and diphosphate, the first enzymatic step in sulfur assimilation pathway. APS synthesis involves the formation of a high-energy phosphoric-sulfuric acid anhydride bond driven by GTP hydrolysis by CysN coupled to ATP hydrolysis by CysD. This is Sulfate adenylyltransferase subunit 2 from Mycobacterium bovis (strain ATCC BAA-935 / AF2122/97).